A 922-amino-acid chain; its full sequence is Metabotropic glutamate receptor 7 (922 aa).

A signal peptide spans 1–34; the sequence is MVQLRKLLRVLTLMKFPCCVLEVLLCALAAAARG. Topologically, residues 35 to 590 are extracellular; that stretch reads QEMYAPHSIR…IIKLEWHSPW (556 aa). Cysteines 67 and 109 form a disulfide. An N-linked (GlcNAc...) asparagine glycan is attached at Asn98. L-glutamate is bound by residues Ser159, 180-182, Tyr230, and Asp314; that span reads AST. Cystine bridges form between Cys249/Cys541, Cys374/Cys390, Cys430/Cys437, Cys523/Cys542, Cys527/Cys545, Cys548/Cys560, and Cys563/Cys576. Residue Lys407 coordinates L-glutamate. Residues Asn458 and Asn486 are each glycosylated (N-linked (GlcNAc...) asparagine). Asn572 is a glycosylation site (N-linked (GlcNAc...) asparagine). The helical transmembrane segment at 591-615 threads the bilayer; sequence AVIPVFLAMLGIIATIFVMATFIRY. Residues 616 to 627 lie on the Cytoplasmic side of the membrane; sequence NDTPIVRASGRE. Residues 628–648 form a helical membrane-spanning segment; that stretch reads LSYVLLTGIFLCYIITFLMIA. Residues 649–654 are Extracellular-facing; that stretch reads KPDVAV. A helical membrane pass occupies residues 655 to 675; that stretch reads CSFRRVFLGLGMCISYAALLT. Topologically, residues 676-702 are cytoplasmic; the sequence is KTNRIYRIFEQGKKSVTAPRLISPTSQ. The chain crosses the membrane as a helical span at residues 703–723; sequence LAITSSLISVQLLGVFIWFGV. The Extracellular portion of the chain corresponds to 724-753; the sequence is DPPNIIIDYDEHKTMNPEQARGVLKCDITD. The chain crosses the membrane as a helical span at residues 754-775; the sequence is LQIICSLGYSILLMVTCTVYAI. The Cytoplasmic portion of the chain corresponds to 776-788; the sequence is KTRGVPENFNEAK. Residues 789 to 810 form a helical membrane-spanning segment; sequence PIGFTMYTTCIVWLAFIPIFFG. Topologically, residues 811–825 are extracellular; it reads TAQSAEKLYIQTTTL. Residues 826-850 form a helical membrane-spanning segment; the sequence is TISMNLSASVALGMLYMPKVYIIIF. At 851–922 the chain is on the cytoplasmic side; sequence HPELNVQKRK…VTWYTIPPTV (72 aa).

It belongs to the G-protein coupled receptor 3 family. In terms of assembly, homodimer. Interacts with PICK1.

It is found in the cell membrane. Its function is as follows. G-protein coupled receptor activated by glutamate that regulates axon outgrowth through the MAPK-cAMP-PKA signaling pathway during neuronal development. Ligand binding causes a conformation change that triggers signaling via guanine nucleotide-binding proteins (G proteins) and modulates the activity of downstream effectors, such as adenylate cyclase that it inhibits. The protein is Metabotropic glutamate receptor 7 (GRM7) of Pongo abelii (Sumatran orangutan).